Consider the following 72-residue polypeptide: Translation initiation factor IF-1 (72 aa).

The S1-like domain occupies 2–72 (AKDDVIEVDG…TRGRITYRFK (71 aa)).

It belongs to the IF-1 family. In terms of assembly, component of the 30S ribosomal translation pre-initiation complex which assembles on the 30S ribosome in the order IF-2 and IF-3, IF-1 and N-formylmethionyl-tRNA(fMet); mRNA recruitment can occur at any time during PIC assembly.

It localises to the cytoplasm. Functionally, one of the essential components for the initiation of protein synthesis. Stabilizes the binding of IF-2 and IF-3 on the 30S subunit to which N-formylmethionyl-tRNA(fMet) subsequently binds. Helps modulate mRNA selection, yielding the 30S pre-initiation complex (PIC). Upon addition of the 50S ribosomal subunit IF-1, IF-2 and IF-3 are released leaving the mature 70S translation initiation complex. This Lactococcus lactis subsp. lactis (strain IL1403) (Streptococcus lactis) protein is Translation initiation factor IF-1.